The primary structure comprises 281 residues: Phosphatidylglycerol--prolipoprotein diacylglyceryl transferase (281 aa).

Transmembrane regions (helical) follow at residues 11 to 31 (IIFTIGPVSARWYGFMYVISF), 57 to 77 (LLYSIFLGSCIGGRIGYIIFY), 89 to 109 (VFYIWEGGMSFHGGLIGAIIV), 121 to 141 (ILEISDFITPLIPFGLGAGRI), 194 to 214 (PTQLYEFFLEGILLFFIIYFF), 222 to 242 (GSISGLFLIFYGLFRIFIEFF), and 255 to 275 (IITMGQILSLPMIIAGLIIMY). R140 serves as a coordination point for a 1,2-diacyl-sn-glycero-3-phospho-(1'-sn-glycerol).

This sequence belongs to the Lgt family.

It is found in the cell inner membrane. The enzyme catalyses L-cysteinyl-[prolipoprotein] + a 1,2-diacyl-sn-glycero-3-phospho-(1'-sn-glycerol) = an S-1,2-diacyl-sn-glyceryl-L-cysteinyl-[prolipoprotein] + sn-glycerol 1-phosphate + H(+). It functions in the pathway protein modification; lipoprotein biosynthesis (diacylglyceryl transfer). In terms of biological role, catalyzes the transfer of the diacylglyceryl group from phosphatidylglycerol to the sulfhydryl group of the N-terminal cysteine of a prolipoprotein, the first step in the formation of mature lipoproteins. This chain is Phosphatidylglycerol--prolipoprotein diacylglyceryl transferase, found in Buchnera aphidicola subsp. Acyrthosiphon pisum (strain 5A).